A 77-amino-acid polypeptide reads, in one-letter code: Large ribosomal subunit protein uL29 (77 aa).

Belongs to the universal ribosomal protein uL29 family.

The chain is Large ribosomal subunit protein uL29 from Cutibacterium acnes (strain DSM 16379 / KPA171202) (Propionibacterium acnes).